The sequence spans 572 residues: Proline--tRNA ligase (572 aa).

Belongs to the class-II aminoacyl-tRNA synthetase family. ProS type 1 subfamily. Homodimer. May form a tertiary complex with YbaK and t-RNA(Pro).

It localises to the cytoplasm. It carries out the reaction tRNA(Pro) + L-proline + ATP = L-prolyl-tRNA(Pro) + AMP + diphosphate. In terms of biological role, catalyzes the attachment of proline to tRNA(Pro) in a two-step reaction: proline is first activated by ATP to form Pro-AMP and then transferred to the acceptor end of tRNA(Pro). As ProRS can inadvertently accommodate and process non-cognate amino acids such as alanine and cysteine, to avoid such errors it has two additional distinct editing activities against alanine. One activity is designated as 'pretransfer' editing and involves the tRNA(Pro)-independent hydrolysis of activated Ala-AMP. The other activity is designated 'posttransfer' editing and involves deacylation of mischarged Ala-tRNA(Pro). The misacylated Cys-tRNA(Pro) is not edited by ProRS, but is probably edited in trans by YbaK. The protein is Proline--tRNA ligase of Haemophilus influenzae (strain ATCC 51907 / DSM 11121 / KW20 / Rd).